Here is a 549-residue protein sequence, read N- to C-terminus: Cation/acetate symporter ActP (549 aa).

Helical transmembrane passes span 33–53, 76–96, 103–123, 149–169, 183–203, 206–226, 262–282, 303–323, 355–375, 404–424, 428–448, 463–483, and 493–513; these read WQAI…TYWA, GLAI…SALV, GLIY…LIAE, LSAC…MVGA, IAVV…GMLA, WVQI…AFMV, ISAL…PHIL, GFMG…IMLV, LFLG…VAGL, VSKI…ILFE, IAFM…PIIL, IGGW…PTIW, and IFPY…GIWF.

It belongs to the sodium:solute symporter (SSF) (TC 2.A.21) family.

The protein resides in the cell inner membrane. Functionally, transports acetate. The protein is Cation/acetate symporter ActP of Enterobacter sp. (strain 638).